The sequence spans 92 residues: Putative membrane protein insertion efficiency factor (92 aa).

The protein belongs to the UPF0161 family.

It is found in the cell inner membrane. In terms of biological role, could be involved in insertion of integral membrane proteins into the membrane. The polypeptide is Putative membrane protein insertion efficiency factor (Synechococcus sp. (strain CC9605)).